The primary structure comprises 119 residues: Anamorsin homolog (119 aa).

Residues 1–15 (MSSSATSTQAFSLKT) are compositionally biased toward polar residues. Disordered stretches follow at residues 1–21 (MSSS…PIPD) and 33–119 (LKQA…TDDV). Positions 42, 49, 52, and 54 each coordinate [2Fe-2S] cluster. Residues 42 to 54 (CTTRRRACKNCVC) form a fe-S binding site A region. [4Fe-4S] cluster-binding residues include Cys-81, Cys-84, Cys-92, and Cys-95. 2 consecutive short sequence motifs (cx2C motif) follow at residues 81 to 84 (CGNC) and 92 to 95 (CANC). Residues 81–95 (CGNCSKGDAFRCANC) form a fe-S binding site B region.

It belongs to the anamorsin family. In terms of assembly, monomer. It depends on [2Fe-2S] cluster as a cofactor. The cofactor is [4Fe-4S] cluster.

Its subcellular location is the cytoplasm. It is found in the mitochondrion intermembrane space. Its function is as follows. Component of the cytosolic iron-sulfur (Fe-S) protein assembly (CIA) machinery. Required for the maturation of extramitochondrial Fe-S proteins. Part of an electron transfer chain functioning in an early step of cytosolic Fe-S biogenesis, facilitating the de novo assembly of a [4Fe-4S] cluster on the cytosolic Fe-S scaffold complex. Electrons are transferred from NADPH via a FAD- and FMN-containing diflavin oxidoreductase. Together with the diflavin oxidoreductase, also required for the assembly of the diferric tyrosyl radical cofactor of ribonucleotide reductase (RNR), probably by providing electrons for reduction during radical cofactor maturation in the catalytic small subunit. The polypeptide is Anamorsin homolog (Leishmania infantum).